Here is a 103-residue protein sequence, read N- to C-terminus: Large ribosomal subunit protein bL21 (103 aa).

Belongs to the bacterial ribosomal protein bL21 family. Part of the 50S ribosomal subunit. Contacts protein L20.

In terms of biological role, this protein binds to 23S rRNA in the presence of protein L20. This is Large ribosomal subunit protein bL21 from Shewanella denitrificans (strain OS217 / ATCC BAA-1090 / DSM 15013).